The chain runs to 225 residues: Membrin-11 (225 aa).

Position 2 is an N-acetylalanine (Ala2). Over 2 to 200 (ASGIVEGGGS…VLRLIERRNR (199 aa)) the chain is Cytoplasmic. The chain crosses the membrane as a helical; Anchor for type IV membrane protein span at residues 201-221 (VDTWIKYAGMIATLVILYLFI). At 222-225 (RWTR) the chain is on the vesicular side.

Belongs to the GOSR2 family.

It localises to the golgi apparatus membrane. Its function is as follows. Involved in transport of proteins from the cis/medial-Golgi to the trans-Golgi network. This Arabidopsis thaliana (Mouse-ear cress) protein is Membrin-11 (MEMB11).